A 71-amino-acid chain; its full sequence is UPF0346 protein SSU05_1322 (71 aa).

This sequence belongs to the UPF0346 family.

The sequence is that of UPF0346 protein SSU05_1322 from Streptococcus suis (strain 05ZYH33).